Consider the following 391-residue polypeptide: 8-amino-7-oxononanoate synthase 1 (391 aa).

Pyridoxal 5'-phosphate is bound at residue 108–109 (GF). Residue His-133 coordinates substrate. Pyridoxal 5'-phosphate is bound by residues Ser-180, 205–208 (DDAH), and 236–239 (TLSK). Lys-239 is subject to N6-(pyridoxal phosphate)lysine. Thr-353 contacts substrate.

The protein belongs to the class-II pyridoxal-phosphate-dependent aminotransferase family. BioF subfamily. In terms of assembly, homodimer. Pyridoxal 5'-phosphate serves as cofactor.

It carries out the reaction 6-carboxyhexanoyl-[ACP] + L-alanine + H(+) = (8S)-8-amino-7-oxononanoate + holo-[ACP] + CO2. Its pathway is cofactor biosynthesis; biotin biosynthesis. Its function is as follows. Catalyzes the decarboxylative condensation of pimeloyl-[acyl-carrier protein] and L-alanine to produce 8-amino-7-oxononanoate (AON), [acyl-carrier protein], and carbon dioxide. The chain is 8-amino-7-oxononanoate synthase 1 from Bacillus velezensis (strain DSM 23117 / BGSC 10A6 / LMG 26770 / FZB42) (Bacillus amyloliquefaciens subsp. plantarum).